The chain runs to 38 residues: Potassium channel toxin alpha-KTx 2.10 (38 aa).

3 cysteine pairs are disulfide-bonded: cysteine 7–cysteine 29, cysteine 13–cysteine 34, and cysteine 17–cysteine 36.

As to expression, expressed by the venom gland.

It localises to the secreted. In terms of biological role, blocks human voltage-gated potassium (Kv) channel Kv1.2/KCNA2. Does not inhibit human Kv1.1/KCNA1 at 100nM concentration. The chain is Potassium channel toxin alpha-KTx 2.10 from Centruroides bonito (Scorpion).